The chain runs to 261 residues: tRNA 5-carboxymethoxyuridine methyltransferase (261 aa).

S-adenosyl-L-methionine contacts are provided by residues arginine 26, glycine 52–glycine 53, aspartate 73, alanine 102–glutamine 103, and histidine 119.

It belongs to the class I-like SAM-binding methyltransferase superfamily. CmoM family. Homodimer.

It carries out the reaction 5-carboxymethoxyuridine(34) in tRNA + S-adenosyl-L-methionine = 5-methoxycarbonylmethoxyuridine(34) in tRNA + S-adenosyl-L-homocysteine. Catalyzes the methylation of 5-carboxymethoxyuridine (cmo5U) to form 5-methoxycarbonylmethoxyuridine (mcmo5U) at position 34 in tRNAs. This is tRNA 5-carboxymethoxyuridine methyltransferase from Escherichia coli O157:H7.